Here is a 182-residue protein sequence, read N- to C-terminus: Large ribosomal subunit protein bL25 (182 aa).

The protein belongs to the bacterial ribosomal protein bL25 family. CTC subfamily. Part of the 50S ribosomal subunit; part of the 5S rRNA/L5/L18/L25 subcomplex. Contacts the 5S rRNA. Binds to the 5S rRNA independently of L5 and L18.

In terms of biological role, this is one of the proteins that binds to the 5S RNA in the ribosome where it forms part of the central protuberance. The chain is Large ribosomal subunit protein bL25 from Borrelia turicatae (strain 91E135).